Here is a 182-residue protein sequence, read N- to C-terminus: uncharacterized protein (182 aa).

The stretch at 66–133 (QKRKRREIKV…NLEIETNSDS (68 aa)) forms a coiled coil.

This is an uncharacterized protein from Acanthamoeba polyphaga (Amoeba).